The following is a 147-amino-acid chain: Epididymal secretory protein E3-alpha (147 aa).

A signal peptide spans 1 to 25; the sequence is MTSSLKIWGILLALLCILCRLCVYS.

As to expression, epididymis, with predominant expression in the corpus region. Moderately expressed in the vas deferens; only low levels are detectable in the caput and cauda regions.

It is found in the secreted. In terms of biological role, possible function in sperm maturation. The chain is Epididymal secretory protein E3-alpha (EDDM3A) from Homo sapiens (Human).